The sequence spans 320 residues: Cytochrome f (320 aa).

Positions 1 to 35 are cleaved as a signal peptide; that stretch reads MEKRNTYDWVTRWVIASFSILTISYMITWTSISNA. The heme site is built by Tyr36, Cys56, Cys59, and His60. Residues 286-306 traverse the membrane as a helical segment; that stretch reads IQGLLVFLASVVLAQIFLVLK.

This sequence belongs to the cytochrome f family. The 4 large subunits of the cytochrome b6-f complex are cytochrome b6, subunit IV (17 kDa polypeptide, petD), cytochrome f and the Rieske protein, while the 4 small subunits are PetG, PetL, PetM and PetN. The complex functions as a dimer. Heme is required as a cofactor.

It localises to the plastid. It is found in the chloroplast thylakoid membrane. Its function is as follows. Component of the cytochrome b6-f complex, which mediates electron transfer between photosystem II (PSII) and photosystem I (PSI), cyclic electron flow around PSI, and state transitions. The chain is Cytochrome f from Welwitschia mirabilis (Tree tumbo).